Reading from the N-terminus, the 428-residue chain is Tryptophan synthase beta chain (428 aa).

Lys100 carries the N6-(pyridoxal phosphate)lysine modification.

Belongs to the TrpB family. As to quaternary structure, tetramer of two alpha and two beta chains. It depends on pyridoxal 5'-phosphate as a cofactor.

The enzyme catalyses (1S,2R)-1-C-(indol-3-yl)glycerol 3-phosphate + L-serine = D-glyceraldehyde 3-phosphate + L-tryptophan + H2O. The protein operates within amino-acid biosynthesis; L-tryptophan biosynthesis; L-tryptophan from chorismate: step 5/5. In terms of biological role, the beta subunit is responsible for the synthesis of L-tryptophan from indole and L-serine. This is Tryptophan synthase beta chain from Streptomyces griseus subsp. griseus (strain JCM 4626 / CBS 651.72 / NBRC 13350 / KCC S-0626 / ISP 5235).